The primary structure comprises 385 residues: 1-deoxy-D-xylulose 5-phosphate reductoisomerase (385 aa).

Thr10, Gly11, Ser12, Ile13, Asn38, and Asn124 together coordinate NADPH. Residue Lys125 participates in 1-deoxy-D-xylulose 5-phosphate binding. Glu126 is an NADPH binding site. Mn(2+) is bound at residue Asp150. 1-deoxy-D-xylulose 5-phosphate contacts are provided by Ser151, Glu152, Ser176, and His199. A Mn(2+)-binding site is contributed by Glu152. Position 205 (Gly205) interacts with NADPH. Ser212, Asn217, Lys218, and Glu221 together coordinate 1-deoxy-D-xylulose 5-phosphate. Glu221 is a binding site for Mn(2+).

The protein belongs to the DXR family. Mg(2+) serves as cofactor. It depends on Mn(2+) as a cofactor.

The enzyme catalyses 2-C-methyl-D-erythritol 4-phosphate + NADP(+) = 1-deoxy-D-xylulose 5-phosphate + NADPH + H(+). The protein operates within isoprenoid biosynthesis; isopentenyl diphosphate biosynthesis via DXP pathway; isopentenyl diphosphate from 1-deoxy-D-xylulose 5-phosphate: step 1/6. Its function is as follows. Catalyzes the NADPH-dependent rearrangement and reduction of 1-deoxy-D-xylulose-5-phosphate (DXP) to 2-C-methyl-D-erythritol 4-phosphate (MEP). The protein is 1-deoxy-D-xylulose 5-phosphate reductoisomerase of Clostridium acetobutylicum (strain ATCC 824 / DSM 792 / JCM 1419 / IAM 19013 / LMG 5710 / NBRC 13948 / NRRL B-527 / VKM B-1787 / 2291 / W).